A 414-amino-acid chain; its full sequence is Protein FAM81B (414 aa).

The span at 1–13 (MTSETDINKSASP) shows a compositional bias: polar residues. The segment at 1–43 (MTSETDINKSASPTAAAKEQPEEPDGPLPGSASEQEKKVRFSP) is disordered. Coiled coils occupy residues 70–94 (NTQR…LEQA), 121–149 (LLEN…QIKA), 188–223 (KLSG…NLDT), and 266–414 (LNLY…LQES).

It belongs to the FAM81 family.

This Bos taurus (Bovine) protein is Protein FAM81B (FAM81B).